The following is a 197-amino-acid chain: uncharacterized protein (197 aa).

The disordered stretch occupies residues 1–31 (MMHFRKKSSISNTSDHDGANRASDVKISEDD). Residues Ser-11 and Ser-23 each carry the phosphoserine modification. Residues 14 to 31 (SDHDGANRASDVKISEDD) are compositionally biased toward basic and acidic residues. Glycyl lysine isopeptide (Lys-Gly) (interchain with G-Cter in ubiquitin) cross-links involve residues Lys-26 and Lys-32. The segment at 157-197 (VGGASSQMYGEQAVYQPQQHVQTEEKQKKKKKGLFGRMKKK) is disordered. Over residues 158–177 (GGASSQMYGEQAVYQPQQHV) the composition is skewed to polar residues. Residues 184–197 (KKKKKGLFGRMKKK) show a composition bias toward basic residues.

This sequence to yeast YGR273c.

This is an uncharacterized protein from Saccharomyces cerevisiae (strain ATCC 204508 / S288c) (Baker's yeast).